Reading from the N-terminus, the 775-residue chain is Mitosis inducer protein kinase cdr2 (775 aa).

The Protein kinase domain occupies 10 to 262 (WELGLSLGSG…MEQIREHPFL (253 aa)). ATP-binding positions include 16–24 (LGSGGPNSS) and lysine 39. Aspartate 133 acts as the Proton acceptor in catalysis. 3 positions are modified to phosphoserine: serine 309, serine 311, and serine 476. The span at 549-563 (NNIDNNNYNQPYANA) shows a compositional bias: low complexity. The disordered stretch occupies residues 549-620 (NNIDNNNYNQ…TKKKLSGSPF (72 aa)). Residues 584-593 (LSQSPASYDS) show a composition bias toward polar residues. 2 positions are modified to phosphoserine: serine 587 and serine 632.

It belongs to the protein kinase superfamily. CAMK Ser/Thr protein kinase family. NIM1 subfamily. In terms of assembly, interacts with blt1 and mid1. Autophosphorylated.

It carries out the reaction L-seryl-[protein] + ATP = O-phospho-L-seryl-[protein] + ADP + H(+). The catalysed reaction is L-threonyl-[protein] + ATP = O-phospho-L-threonyl-[protein] + ADP + H(+). Its function is as follows. Acts as a mitotic inducer. In G2 it negatively regulates wee1, a mitotic inhibitor. Also has a role in cytokinesis where it required for proper septum formation. The chain is Mitosis inducer protein kinase cdr2 (cdr2) from Schizosaccharomyces pombe (strain 972 / ATCC 24843) (Fission yeast).